Consider the following 348-residue polypeptide: Replication-associated protein (348 aa).

A compositionally biased stretch (low complexity) spans 1 to 17 (MRAPASSAASNRPGPSN). Residues 1 to 22 (MRAPASSAASNRPGPSNHPTPR) are disordered. The 104-residue stretch at 22–125 (RWNSKQFFLT…NGDSDEMGEL (104 aa)) folds into the CRESS-DNA virus Rep endonuclease domain. An RCR-1 motif is present at residues 29 to 32 (FLTY). A divalent metal cation is bound by residues glutamate 63, histidine 71, and histidine 73. The RCR-2 signature appears at 71 to 73 (HLH). Tyrosine 111 functions as the For DNA cleavage activity in the catalytic mechanism. Positions 111–114 (YISK) match the RCR-3 motif. Positions 176–188 (SAAALFTEPPPVY) are oligomerization. 228–235 (GPSRTGKT) serves as a coordination point for ATP. The tract at residues 251–269 (VDFTHYDKDAIYNVIDDVP) is transactivation. The short motif at 291–301 (KYGKKKKIPGG) is the Nuclear localization signal element.

Belongs to the geminiviridae Rep protein family. As to quaternary structure, homooligomer. Rep binds to repeated DNA motifs (iterons). Forms the O-complex, which is a Rep-DNA complex involved in the initiation of RCR. Part of the C- and V-complexes which are RepA-Rep-DNA complexes involved in the c-sense and v-sense transcription. The cofactor is Mg(2+). Mn(2+) serves as cofactor.

It is found in the host nucleus. In terms of biological role, essential for the replication of viral ssDNA. The closed circular ssDNA genome is first converted to a superhelical dsDNA. Rep binds a specific region at the genome origin of replication. It introduces an endonucleolytic nick within the conserved sequence 5'-TAATATTAC-3' in the intergenic region of the genome present in all geminiviruses, thereby initiating the rolling circle replication (RCR). Following cleavage, binds covalently to the 5'-phosphate of DNA as a tyrosyl ester. The cleavage gives rise to a free 3'-OH that serves as a primer for the cellular DNA polymerase. The polymerase synthesizes the (+) strand DNA by rolling circle mechanism. After one round of replication, a Rep-catalyzed nucleotidyl transfer reaction releases a circular single-stranded virus genome, thereby terminating the replication. Displays origin-specific DNA cleavage, nucleotidyl transferase, ATPase and helicase activities. Acts as an inhibitor of C-sense gene transcription. This Miscanthus streak virus (isolate 91) (MiSV) protein is Replication-associated protein.